Consider the following 557-residue polypeptide: Probable serine/threonine-protein kinase WNK7 (557 aa).

Residues 28 to 285 form the Protein kinase domain; sequence IRYKEVIGKG…AEELLLDSFL (258 aa). ATP-binding positions include 108 to 111 and Lys-158; that span reads TELF. The Proton acceptor role is filled by Asp-175. Polar residues predominate over residues 451–477; the sequence is QNQSSKDNHQNGASSQAGESISHSLSS. The segment at 451–517 is disordered; sequence QNQSSKDNHQ…EEEEDERLKE (67 aa). At Ser-505 the chain carries Phosphoserine.

Belongs to the protein kinase superfamily. Ser/Thr protein kinase family. WNK subfamily.

It catalyses the reaction L-seryl-[protein] + ATP = O-phospho-L-seryl-[protein] + ADP + H(+). The catalysed reaction is L-threonyl-[protein] + ATP = O-phospho-L-threonyl-[protein] + ADP + H(+). Its function is as follows. May regulate flowering time by modulating the photoperiod pathway. The polypeptide is Probable serine/threonine-protein kinase WNK7 (WNK7) (Arabidopsis thaliana (Mouse-ear cress)).